The chain runs to 194 residues: MRYSKLVLASTSAYRRLLLERFQLPFETARPDVDETPLPNEMPPDTANRLAVEKARAVAVRHPDALVIGSDQVAALNGEIFGKPGTVAAAIGQLQRMRGATVIFHTAVAVVNARTGQVRCENVPTRVKFRELSDDEIVRYVDKERPLDCAGSAKSEALGITLLDSLSGDDPTALVGLPLIALSRMLRAEGLLLP.

Catalysis depends on Asp-71, which acts as the Proton acceptor.

Belongs to the Maf family. YceF subfamily. Requires a divalent metal cation as cofactor.

It is found in the cytoplasm. The catalysed reaction is N(7)-methyl-GTP + H2O = N(7)-methyl-GMP + diphosphate + H(+). Its function is as follows. Nucleoside triphosphate pyrophosphatase that hydrolyzes 7-methyl-GTP (m(7)GTP). May have a dual role in cell division arrest and in preventing the incorporation of modified nucleotides into cellular nucleic acids. In Aromatoleum aromaticum (strain DSM 19018 / LMG 30748 / EbN1) (Azoarcus sp. (strain EbN1)), this protein is 7-methyl-GTP pyrophosphatase.